A 420-amino-acid polypeptide reads, in one-letter code: 2,3-dimethylmalate dehydratase large subunit (420 aa).

[4Fe-4S] cluster contacts are provided by C301, C361, and C364.

This sequence belongs to the aconitase/IPM isomerase family. LeuC type 2 subfamily. In terms of assembly, heterodimer of a large and a small subunit. The cofactor is [4Fe-4S] cluster.

It catalyses the reaction (2R,3S)-2,3-dimethylmalate = dimethylmaleate + H2O. It participates in cofactor degradation; nicotinate degradation; propanoate and pyruvate from 6-hydroxynicotinate: step 7/8. This chain is 2,3-dimethylmalate dehydratase large subunit (dmdA), found in Eubacterium barkeri (Clostridium barkeri).